The following is a 315-amino-acid chain: Aspartate carbamoyltransferase catalytic subunit (315 aa).

Carbamoyl phosphate is bound by residues R64 and T65. K93 is a binding site for L-aspartate. Carbamoyl phosphate is bound by residues R114, H142, and Q145. L-aspartate-binding residues include R175 and R237. L276 and P277 together coordinate carbamoyl phosphate.

The protein belongs to the aspartate/ornithine carbamoyltransferase superfamily. ATCase family. In terms of assembly, heterooligomer of catalytic and regulatory chains.

It catalyses the reaction carbamoyl phosphate + L-aspartate = N-carbamoyl-L-aspartate + phosphate + H(+). The protein operates within pyrimidine metabolism; UMP biosynthesis via de novo pathway; (S)-dihydroorotate from bicarbonate: step 2/3. Its function is as follows. Catalyzes the condensation of carbamoyl phosphate and aspartate to form carbamoyl aspartate and inorganic phosphate, the committed step in the de novo pyrimidine nucleotide biosynthesis pathway. The chain is Aspartate carbamoyltransferase catalytic subunit from Thermofilum pendens (strain DSM 2475 / Hrk 5).